A 526-amino-acid chain; its full sequence is Peptide chain release factor 3 (526 aa).

The 269-residue stretch at 9–277 folds into the tr-type G domain; that stretch reads DKRRTFAIIS…GIVEWAPKPL (269 aa). Residues 18 to 25, 86 to 90, and 140 to 143 each bind GTP; these read SHPDAGKT, DTPGH, and NKLD.

It belongs to the TRAFAC class translation factor GTPase superfamily. Classic translation factor GTPase family. PrfC subfamily.

The protein localises to the cytoplasm. In terms of biological role, increases the formation of ribosomal termination complexes and stimulates activities of RF-1 and RF-2. It binds guanine nucleotides and has strong preference for UGA stop codons. It may interact directly with the ribosome. The stimulation of RF-1 and RF-2 is significantly reduced by GTP and GDP, but not by GMP. The sequence is that of Peptide chain release factor 3 from Shewanella sp. (strain ANA-3).